Consider the following 162-residue polypeptide: MYVELVDETGQVPSEIIEQTKEVLAFAAKKLDLKESTEMSVTFVDNARSHELNLQYRETDRPTDVISLEYKPDESEFFFDEDMELPEELLEEMDPFIGELFISIDKAAEQAADYGHSIEREYGWLAVHGFLHINGYDHYTPEEESEMFALQEEILTAYGLTR.

Zn(2+) contacts are provided by His128, His132, and His138.

The protein belongs to the endoribonuclease YbeY family. Requires Zn(2+) as cofactor.

The protein localises to the cytoplasm. Functionally, single strand-specific metallo-endoribonuclease involved in late-stage 70S ribosome quality control and in maturation of the 3' terminus of the 16S rRNA. In Lactococcus lactis subsp. cremoris (strain MG1363), this protein is Endoribonuclease YbeY.